We begin with the raw amino-acid sequence, 310 residues long: MQPPGNDAPAGCPFSGARAQGTQAAHEAPHVPGDAGEQAGWHNAQLDFSKSMSYGDYLSLNAILNAQHPLSPDHNEMLFIIQHQTSELWMKLALFELRGALDAVRSDALPPAFKMLARVSRILEQLVQAWNVLSTMTPSEYSAMRPYLGQSSGFQSYQYRQLEFLLGNKNAQMLQPHAHRPDILEQVRATLDAPSFYDEVVRLLARRGFPIAPSRLDRDWRQPTQHDETVEAAWLEVYRHPQQHWELYEMAEELVDLEDAFRQWRFRHVTTVERIIGFKQGTGGTSGAPYLRKMLDVVLFPELWHVRTTL.

The segment at 1 to 39 is disordered; sequence MQPPGNDAPAGCPFSGARAQGTQAAHEAPHVPGDAGEQA. Substrate-binding positions include 79 to 83, Y141, and R145; that span reads FIIQH. Residue H268 participates in heme binding. Residue T282 coordinates substrate.

This sequence belongs to the tryptophan 2,3-dioxygenase family. Homotetramer. Heme serves as cofactor.

It carries out the reaction L-tryptophan + O2 = N-formyl-L-kynurenine. The protein operates within amino-acid degradation; L-tryptophan degradation via kynurenine pathway; L-kynurenine from L-tryptophan: step 1/2. In terms of biological role, heme-dependent dioxygenase that catalyzes the oxidative cleavage of the L-tryptophan (L-Trp) pyrrole ring and converts L-tryptophan to N-formyl-L-kynurenine. Catalyzes the oxidative cleavage of the indole moiety. The sequence is that of Tryptophan 2,3-dioxygenase from Burkholderia multivorans (strain ATCC 17616 / 249).